A 311-amino-acid chain; its full sequence is Methionyl-tRNA formyltransferase (311 aa).

(6S)-5,6,7,8-tetrahydrofolate is bound at residue 109–112 (SLLP).

Belongs to the Fmt family.

The enzyme catalyses L-methionyl-tRNA(fMet) + (6R)-10-formyltetrahydrofolate = N-formyl-L-methionyl-tRNA(fMet) + (6S)-5,6,7,8-tetrahydrofolate + H(+). Functionally, attaches a formyl group to the free amino group of methionyl-tRNA(fMet). The formyl group appears to play a dual role in the initiator identity of N-formylmethionyl-tRNA by promoting its recognition by IF2 and preventing the misappropriation of this tRNA by the elongation apparatus. The chain is Methionyl-tRNA formyltransferase from Staphylococcus aureus (strain bovine RF122 / ET3-1).